Consider the following 151-residue polypeptide: 3-hydroxyacyl-thioester dehydratase Z (151 aa).

In terms of domain architecture, MaoC-like spans 11-131 (AAAAGEKVGQ…TVQATVSTTV (121 aa)). Residues 60–63 (IAHG), 86–89 (AINY), 97–99 (PAP), Gln124, and Arg148 each bind substrate.

It belongs to the enoyl-CoA hydratase/isomerase family. As to quaternary structure, homodimer.

The catalysed reaction is a (3R)-3-hydroxyacyl-CoA = a (2E)-enoyl-CoA + H2O. In terms of biological role, shows trans-enoyl-CoA hydratase/3-hydroxyacyl-CoA dehydratase activity. The protein is 3-hydroxyacyl-thioester dehydratase Z of Mycobacterium bovis (strain ATCC BAA-935 / AF2122/97).